We begin with the raw amino-acid sequence, 339 residues long: Glyoxylate reductase (339 aa).

NADP(+)-binding positions include 157–160 (LGRI) and 239–241 (TAR). Residues R241 and E270 contribute to the active site. H289 serves as the catalytic Proton donor. An NADP(+)-binding site is contributed by 289-291 (HIA).

It belongs to the D-isomer specific 2-hydroxyacid dehydrogenase family. GyaR subfamily. Homodimer.

Its subcellular location is the cytoplasm. The enzyme catalyses glycolate + NAD(+) = glyoxylate + NADH + H(+). The protein is Glyoxylate reductase of Thermofilum pendens (strain DSM 2475 / Hrk 5).